Reading from the N-terminus, the 379-residue chain is Anhydro-N-acetylmuramic acid kinase (379 aa).

Residue 9–16 (GTSADGVD) coordinates ATP.

This sequence belongs to the anhydro-N-acetylmuramic acid kinase family.

The catalysed reaction is 1,6-anhydro-N-acetyl-beta-muramate + ATP + H2O = N-acetyl-D-muramate 6-phosphate + ADP + H(+). The protein operates within amino-sugar metabolism; 1,6-anhydro-N-acetylmuramate degradation. It participates in cell wall biogenesis; peptidoglycan recycling. Functionally, catalyzes the specific phosphorylation of 1,6-anhydro-N-acetylmuramic acid (anhMurNAc) with the simultaneous cleavage of the 1,6-anhydro ring, generating MurNAc-6-P. Is required for the utilization of anhMurNAc either imported from the medium or derived from its own cell wall murein, and thus plays a role in cell wall recycling. The sequence is that of Anhydro-N-acetylmuramic acid kinase from Prochlorococcus marinus (strain MIT 9303).